Consider the following 261-residue polypeptide: Syntaxin-7 (261 aa).

Position 2 is an N-acetylserine (S2). The Cytoplasmic segment spans residues 2 to 238 (SYTPGIGGDS…DYQRKSRKTL (237 aa)). Residue T4 is modified to Phosphothreonine. Position 45 is a phosphoserine (S45). A coiled-coil region spans residues 47-68 (ELRQLLQQKQQYTNQLAKETDK). At S75 the chain carries Phosphoserine. The residue at position 79 (T79) is a Phosphothreonine. 4 positions are modified to phosphoserine: S125, S126, S129, and S205. The tract at residues 128-148 (VSGGFPEDSSKEKNLVSWESQ) is disordered. The t-SNARE coiled-coil homology domain occupies 165–227 (LRLIHERESS…QQANQQLSRA (63 aa)). A helical; Anchor for type IV membrane protein membrane pass occupies residues 239 to 259 (CIIIFILVVRIVIICLIVWGL). The Vesicular portion of the chain corresponds to 260–261 (KG).

This sequence belongs to the syntaxin family. Interacts with VPS11, VPS16 and VPS18. Interacts with VPS33A. Forms a SNARE complex with VTI1B, STX8 and VAMP8 which functions in the homotypic fusion of late endosomes. Component of the SNARE complex composed of STX7, STX8, VAMP7 and VTI1B that is required for heterotypic fusion of late endosomes with lysosomes. Interacts with TPC1.

It is found in the early endosome membrane. Its function is as follows. May be involved in protein trafficking from the plasma membrane to the early endosome (EE) as well as in homotypic fusion of endocytic organelles. Mediates the endocytic trafficking from early endosomes to late endosomes and lysosomes. This is Syntaxin-7 (Stx7) from Mus musculus (Mouse).